The following is a 239-amino-acid chain: Protein TIPIN homolog (239 aa).

Composition is skewed to acidic residues over residues 1–14 (MDEM…DELD) and 156–166 (DGADDDEDDLF). 2 disordered regions span residues 1–38 (MDEM…RRII) and 135–239 (ESTD…NNDW). Basic and acidic residues-rich tracts occupy residues 169–193 (LPEK…EKKN) and 206–223 (YRMM…AREA). Positions 224-239 (EAEDELMEDFDLNNDW) are enriched in acidic residues.

It belongs to the CSM3 family.

The protein localises to the cytoplasm. It is found in the nucleus. Required for normal progression of S-phase. Important for cell survival after DNA damage or replication stress. This chain is Protein TIPIN homolog, found in Caenorhabditis briggsae.